Consider the following 61-residue polypeptide: Potassium channel toxin alpha-KTx 6.8 (61 aa).

The N-terminal stretch at 1 to 23 is a signal peptide; sequence MNAKFILLLLVVTTTILLPDTQG. Intrachain disulfides connect Cys29-Cys50, Cys35-Cys55, Cys39-Cys57, and Cys45-Cys60. Residue Cys60 is modified to Cysteine amide.

It belongs to the short scorpion toxin superfamily. Potassium channel inhibitor family. Alpha-KTx 06 subfamily. In terms of tissue distribution, expressed by the venom gland.

It localises to the secreted. Blocker of voltage-gated potassium channels. This is Potassium channel toxin alpha-KTx 6.8 from Opistophthalmus carinatus (African yellow leg scorpion).